Consider the following 78-residue polypeptide: Large ribosomal subunit protein bL28 (78 aa).

A disordered region spans residues M1–H20.

This sequence belongs to the bacterial ribosomal protein bL28 family.

The polypeptide is Large ribosomal subunit protein bL28 (Vibrio campbellii (strain ATCC BAA-1116)).